A 311-amino-acid polypeptide reads, in one-letter code: Aspartate carbamoyltransferase catalytic subunit (311 aa).

2 residues coordinate carbamoyl phosphate: Arg-55 and Thr-56. Lys-85 is an L-aspartate binding site. Arg-106, His-135, and Gln-138 together coordinate carbamoyl phosphate. Residues Arg-168 and Arg-230 each contribute to the L-aspartate site. Residues Leu-268 and Pro-269 each coordinate carbamoyl phosphate.

Belongs to the aspartate/ornithine carbamoyltransferase superfamily. ATCase family. As to quaternary structure, heterododecamer (2C3:3R2) of six catalytic PyrB chains organized as two trimers (C3), and six regulatory PyrI chains organized as three dimers (R2).

It carries out the reaction carbamoyl phosphate + L-aspartate = N-carbamoyl-L-aspartate + phosphate + H(+). The protein operates within pyrimidine metabolism; UMP biosynthesis via de novo pathway; (S)-dihydroorotate from bicarbonate: step 2/3. Catalyzes the condensation of carbamoyl phosphate and aspartate to form carbamoyl aspartate and inorganic phosphate, the committed step in the de novo pyrimidine nucleotide biosynthesis pathway. The polypeptide is Aspartate carbamoyltransferase catalytic subunit (Baumannia cicadellinicola subsp. Homalodisca coagulata).